A 186-amino-acid chain; its full sequence is NADH dehydrogenase [ubiquinone] 1 beta subcomplex subunit 8, mitochondrial (186 aa).

The transit peptide at M1–T28 directs the protein to the mitochondrion. A helical membrane pass occupies residues L133–Y153.

Belongs to the complex I NDUFB8 subunit family. In terms of assembly, complex I is composed of 45 different subunits.

Its subcellular location is the mitochondrion inner membrane. In terms of biological role, accessory subunit of the mitochondrial membrane respiratory chain NADH dehydrogenase (Complex I), that is believed not to be involved in catalysis. Complex I functions in the transfer of electrons from NADH to the respiratory chain. The immediate electron acceptor for the enzyme is believed to be ubiquinone. The polypeptide is NADH dehydrogenase [ubiquinone] 1 beta subcomplex subunit 8, mitochondrial (NDUFB8) (Bos taurus (Bovine)).